We begin with the raw amino-acid sequence, 878 residues long: Longitudinals lacking protein, isoforms N/O/W/X/Y (878 aa).

The region spanning 32-97 (VDCTLAAEGK…MYRGEVNISQ (66 aa)) is the BTB domain. 3 disordered regions span residues 115–200 (LSDN…SSVL), 228–340 (SSGP…ASAS), and 542–583 (QIVK…QTHA). Composition is skewed to low complexity over residues 162–175 (SGDVSGSREGSSSP), 228–251 (SSGPAAGTSSQASSTQQQQPLTST), 263–293 (TSSTAAPASGASASAAVQQAHLHQQQAQTTS), 329–340 (NSATGPNPASAS), and 546–569 (QQHQQQHQQQHQHPQQQHQPQQQQ). A C2H2-type 1; degenerate zinc finger spans residues 709–731 (YACNVCGKTYKIKGSLKRHKNYE). The C2H2-type 2 zinc-finger motif lies at 794–816 (FQCDFCLKWFKRRSHLNRHKKLH). The segment at 826 to 863 (SKQKPKTTSGQNLSHDANTDDEVATTNPAATEDESNYP) is disordered. Residues 831-841 (KTTSGQNLSHD) are compositionally biased toward polar residues.

In terms of tissue distribution, by stage 11, isoform W, isoform X and isoform Y are expressed throughout the mesoderm, whereas isoform O is expressed in both mesoderm and ectoderm. From stage 15, expression of isoform O expands to all tissues, whereas expression of isoform W, isoform X and isoform Y becomes restricted during later stages; starting from stage 14 to 16, isoform W, isoform X and isoform Y are expressed in muscle. From stages 14 and 15, isoform W and isoform Y are expressed in the gut. For some isoforms, expression is also seen in specific types of cells in the embryo; isoform O is expressed in the ventral furrow at stage 5 and in the dorsal epidermis from stage 7. Isoform Y shows prominent expression in the gonad starting at stage 15.

It localises to the nucleus. Functionally, putative transcription factor required for axon growth and guidance in the central and peripheral nervous systems. Repels CNS axons away from the midline by promoting the expression of the midline repellent sli and its receptor robo. The protein is Longitudinals lacking protein, isoforms N/O/W/X/Y of Drosophila melanogaster (Fruit fly).